Here is a 218-residue protein sequence, read N- to C-terminus: Superoxide dismutase [Mn], mitochondrial (218 aa).

The Mn(2+) site is built by His27, His84, Asp174, and His178.

This sequence belongs to the iron/manganese superoxide dismutase family. As to quaternary structure, homotetramer. It depends on Mn(2+) as a cofactor.

Its subcellular location is the mitochondrion matrix. The catalysed reaction is 2 superoxide + 2 H(+) = H2O2 + O2. Its function is as follows. Destroys superoxide anion radicals which are normally produced within the cells and which are toxic to biological systems. The protein is Superoxide dismutase [Mn], mitochondrial (SODA) of Chlamydomonas reinhardtii (Chlamydomonas smithii).